We begin with the raw amino-acid sequence, 258 residues long: Regulatory protein RecX (258 aa).

It belongs to the RecX family.

Its subcellular location is the cytoplasm. Functionally, modulates RecA activity. This chain is Regulatory protein RecX, found in Streptococcus pneumoniae serotype 19F (strain G54).